A 275-amino-acid polypeptide reads, in one-letter code: 4-hydroxy-3-methylbut-2-enyl diphosphate reductase (275 aa).

Cysteine 12 serves as a coordination point for [4Fe-4S] cluster. Histidine 40 and histidine 70 together coordinate (2E)-4-hydroxy-3-methylbut-2-enyl diphosphate. Residues histidine 40 and histidine 70 each coordinate dimethylallyl diphosphate. Residues histidine 40 and histidine 70 each coordinate isopentenyl diphosphate. Cysteine 92 is a [4Fe-4S] cluster binding site. Histidine 119 lines the (2E)-4-hydroxy-3-methylbut-2-enyl diphosphate pocket. Histidine 119 serves as a coordination point for dimethylallyl diphosphate. Histidine 119 contributes to the isopentenyl diphosphate binding site. The Proton donor role is filled by glutamate 121. Threonine 151 contributes to the (2E)-4-hydroxy-3-methylbut-2-enyl diphosphate binding site. Cysteine 181 is a [4Fe-4S] cluster binding site. Serine 209, serine 210, asparagine 211, and serine 251 together coordinate (2E)-4-hydroxy-3-methylbut-2-enyl diphosphate. 4 residues coordinate dimethylallyl diphosphate: serine 209, serine 210, asparagine 211, and serine 251. Residues serine 209, serine 210, asparagine 211, and serine 251 each coordinate isopentenyl diphosphate.

Belongs to the IspH family. The cofactor is [4Fe-4S] cluster.

The enzyme catalyses isopentenyl diphosphate + 2 oxidized [2Fe-2S]-[ferredoxin] + H2O = (2E)-4-hydroxy-3-methylbut-2-enyl diphosphate + 2 reduced [2Fe-2S]-[ferredoxin] + 2 H(+). It carries out the reaction dimethylallyl diphosphate + 2 oxidized [2Fe-2S]-[ferredoxin] + H2O = (2E)-4-hydroxy-3-methylbut-2-enyl diphosphate + 2 reduced [2Fe-2S]-[ferredoxin] + 2 H(+). It participates in isoprenoid biosynthesis; dimethylallyl diphosphate biosynthesis; dimethylallyl diphosphate from (2E)-4-hydroxy-3-methylbutenyl diphosphate: step 1/1. Its pathway is isoprenoid biosynthesis; isopentenyl diphosphate biosynthesis via DXP pathway; isopentenyl diphosphate from 1-deoxy-D-xylulose 5-phosphate: step 6/6. In terms of biological role, catalyzes the conversion of 1-hydroxy-2-methyl-2-(E)-butenyl 4-diphosphate (HMBPP) into a mixture of isopentenyl diphosphate (IPP) and dimethylallyl diphosphate (DMAPP). Acts in the terminal step of the DOXP/MEP pathway for isoprenoid precursor biosynthesis. The chain is 4-hydroxy-3-methylbut-2-enyl diphosphate reductase from Thermotoga petrophila (strain ATCC BAA-488 / DSM 13995 / JCM 10881 / RKU-1).